The chain runs to 763 residues: Heat shock 70 kDa protein 16 (763 aa).

2 disordered regions span residues 509–529 (ISEE…PSSG) and 701–763 (EKTT…MELD). Residue Ser-528 is modified to Phosphoserine. Positions 701 to 714 (EKTTEQESLPKDAN) are enriched in basic and acidic residues.

The protein belongs to the heat shock protein 70 (TC 1.A.33) family. HSP110/SSE subfamily.

This chain is Heat shock 70 kDa protein 16 (HSP70-16), found in Arabidopsis thaliana (Mouse-ear cress).